A 442-amino-acid chain; its full sequence is PTS system oligo-beta-mannoside-specific EIIC component (442 aa).

One can recognise a PTS EIIC type-3 domain in the interval 5-411; sequence ISQFLVPIAG…LIVFVIWFPF (407 aa). Helical transmembrane passes span 28–48, 67–87, 97–117, 138–157, 177–197, 205–225, 228–248, 286–306, 329–349, 365–385, and 391–411; these read AFMLAFPLTIFGSIFVVLTNL, FGIASTATMGIMSVFVVFGIG, EAVFGGAIALVSFLLLTPFII, GMFLGMITAFLSGEIYRRIV, FAALIPAFITLTVFLLINVMV, MHDVIYHAIQAPLVGLGSGII, LIAVFFIQILWFFGLHGQIII, TVGMGGTGMTLAIVFTILIFM, PIIFGLPIVMNPIIIVPWVLA, LVPPPTGVTVPWTVPLFINGI, and IMGGVMQLINLLIVFVIWFPF.

It is found in the cell membrane. Functionally, the phosphoenolpyruvate-dependent sugar phosphotransferase system (sugar PTS), a major carbohydrate active transport system, catalyzes the phosphorylation of incoming sugar substrates concomitantly with their translocation across the cell membrane. The enzyme II GmuABC PTS system is involved in the transport of oligo-glucomannans such as cellobiose or mannobiose. The chain is PTS system oligo-beta-mannoside-specific EIIC component from Bacillus subtilis (strain 168).